The sequence spans 160 residues: UPF0758 protein YfjY (160 aa).

The MPN domain maps to 38 to 160; the sequence is AFTSTQAARD…IYSFAEHGLL (123 aa). His-109, His-111, and Asp-122 together coordinate Zn(2+). The JAMM motif motif lies at 109 to 122; it reads HNHPSGDTTPSQAD.

This sequence belongs to the UPF0758 family.

The chain is UPF0758 protein YfjY (yfjY) from Escherichia coli (strain K12).